The following is a 104-amino-acid chain: L-rhamnose mutarotase (104 aa).

A substrate-binding site is contributed by Y18. The active-site Proton donor is the H22. Residues Y41 and 76 to 77 (WW) each bind substrate.

This sequence belongs to the rhamnose mutarotase family. Homodimer.

It localises to the cytoplasm. The enzyme catalyses alpha-L-rhamnose = beta-L-rhamnose. It participates in carbohydrate metabolism; L-rhamnose metabolism. In terms of biological role, involved in the anomeric conversion of L-rhamnose. The protein is L-rhamnose mutarotase of Rhizobium meliloti (strain 1021) (Ensifer meliloti).